A 314-amino-acid chain; its full sequence is Serine/threonine-protein phosphatase PP2A-4 catalytic subunit (314 aa).

Mn(2+)-binding residues include Asp62, His64, Asp90, and Asn122. His123 (proton donor) is an active-site residue. His172 and His246 together coordinate Mn(2+).

The protein belongs to the PPP phosphatase family. PP-2A subfamily. Mn(2+) serves as cofactor.

The protein resides in the cytoplasm. The catalysed reaction is O-phospho-L-seryl-[protein] + H2O = L-seryl-[protein] + phosphate. It catalyses the reaction O-phospho-L-threonyl-[protein] + H2O = L-threonyl-[protein] + phosphate. This chain is Serine/threonine-protein phosphatase PP2A-4 catalytic subunit (PP2A4), found in Oryza sativa subsp. japonica (Rice).